Consider the following 127-residue polypeptide: uncharacterized protein (127 aa).

This is an uncharacterized protein from Human cytomegalovirus (strain Toledo) (HHV-5).